We begin with the raw amino-acid sequence, 364 residues long: Histidinol-phosphate aminotransferase (364 aa).

K225 carries the post-translational modification N6-(pyridoxal phosphate)lysine.

It belongs to the class-II pyridoxal-phosphate-dependent aminotransferase family. Histidinol-phosphate aminotransferase subfamily. Homodimer. It depends on pyridoxal 5'-phosphate as a cofactor.

It catalyses the reaction L-histidinol phosphate + 2-oxoglutarate = 3-(imidazol-4-yl)-2-oxopropyl phosphate + L-glutamate. Its pathway is amino-acid biosynthesis; L-histidine biosynthesis; L-histidine from 5-phospho-alpha-D-ribose 1-diphosphate: step 7/9. The protein is Histidinol-phosphate aminotransferase of Sulfurovum sp. (strain NBC37-1).